The chain runs to 231 residues: Lipoprotein-releasing system ATP-binding protein LolD (231 aa).

Positions 6 to 230 (LSCKNVSKKY…DGELELVINS (225 aa)) constitute an ABC transporter domain. 42–49 (GLSGSGKT) provides a ligand contact to ATP.

The protein belongs to the ABC transporter superfamily. Lipoprotein translocase (TC 3.A.1.125) family. The complex is composed of two ATP-binding proteins (LolD) and two transmembrane proteins (LolC and LolE).

It localises to the cell inner membrane. Part of the ABC transporter complex LolCDE involved in the translocation of mature outer membrane-directed lipoproteins, from the inner membrane to the periplasmic chaperone, LolA. Responsible for the formation of the LolA-lipoprotein complex in an ATP-dependent manner. The protein is Lipoprotein-releasing system ATP-binding protein LolD of Francisella tularensis subsp. tularensis (strain FSC 198).